Here is a 251-residue protein sequence, read N- to C-terminus: Large ribosomal subunit protein uL3 (251 aa).

Position 151 is an N5-methylglutamine (Gln151). The disordered stretch occupies residues 214–251; the sequence is KDAPFPAGLKSAANSNSAPTETPAEEVAAPEATEGQEG. Residues 231–251 are compositionally biased toward low complexity; that stretch reads APTETPAEEVAAPEATEGQEG.

Belongs to the universal ribosomal protein uL3 family. Part of the 50S ribosomal subunit. Forms a cluster with proteins L14 and L19. Methylated by PrmB.

Functionally, one of the primary rRNA binding proteins, it binds directly near the 3'-end of the 23S rRNA, where it nucleates assembly of the 50S subunit. The polypeptide is Large ribosomal subunit protein uL3 (Rhizorhabdus wittichii (strain DSM 6014 / CCUG 31198 / JCM 15750 / NBRC 105917 / EY 4224 / RW1) (Sphingomonas wittichii)).